Consider the following 310-residue polypeptide: Glycerol-3-phosphate dehydrogenase [NAD(P)+] (310 aa).

Residues Trp14, Arg34, Arg35, and Lys82 each coordinate NADPH. Positions 82 and 110 each coordinate sn-glycerol 3-phosphate. Ser114 provides a ligand contact to NADPH. Sn-glycerol 3-phosphate contacts are provided by Lys165, Asp218, Ser228, Arg229, and Asn230. The active-site Proton acceptor is Lys165. Position 229 (Arg229) interacts with NADPH. Glu255 contacts NADPH.

Belongs to the NAD-dependent glycerol-3-phosphate dehydrogenase family.

Its subcellular location is the cytoplasm. The enzyme catalyses sn-glycerol 3-phosphate + NAD(+) = dihydroxyacetone phosphate + NADH + H(+). The catalysed reaction is sn-glycerol 3-phosphate + NADP(+) = dihydroxyacetone phosphate + NADPH + H(+). It participates in membrane lipid metabolism; glycerophospholipid metabolism. Its function is as follows. Catalyzes the reduction of the glycolytic intermediate dihydroxyacetone phosphate (DHAP) to sn-glycerol 3-phosphate (G3P), the key precursor for phospholipid synthesis. The protein is Glycerol-3-phosphate dehydrogenase [NAD(P)+] of Acaryochloris marina (strain MBIC 11017).